The primary structure comprises 328 residues: dITP/XTP pyrophosphatase (328 aa).

The segment at 1–129 is unknown; the sequence is MSEKIYEYKD…ATSEQGFGDT (129 aa). The interval 130-324 is NTP pyrophosphatase; it reads ILIATRNEGK…KLMEVFPAWQ (195 aa). A substrate-binding site is contributed by 134–139; it reads TRNEGK. Catalysis depends on Asp-196, which acts as the Proton acceptor. Asp-196 lines the Mg(2+) pocket. Substrate-binding positions include Ser-197, 280-283, Lys-303, and 308-309; these read FGYD and HR.

It belongs to the HAM1 NTPase family. As to quaternary structure, homodimer. Mg(2+) is required as a cofactor.

It carries out the reaction XTP + H2O = XMP + diphosphate + H(+). The catalysed reaction is dITP + H2O = dIMP + diphosphate + H(+). The enzyme catalyses ITP + H2O = IMP + diphosphate + H(+). Functionally, pyrophosphatase that catalyzes the hydrolysis of nucleoside triphosphates to their monophosphate derivatives, with a high preference for the non-canonical purine nucleotides XTP (xanthosine triphosphate), dITP (deoxyinosine triphosphate) and ITP. Seems to function as a house-cleaning enzyme that removes non-canonical purine nucleotides from the nucleotide pool, thus preventing their incorporation into DNA/RNA and avoiding chromosomal lesions. The protein is dITP/XTP pyrophosphatase of Streptococcus pyogenes serotype M18 (strain MGAS8232).